Consider the following 427-residue polypeptide: UPF0761 membrane protein Cphamn1_1013 (427 aa).

Helical transmembrane passes span 51-71, 107-127, 147-167, 188-208, 218-238, and 251-271; these read LLSL…SPVF, TVPT…ISTI, FTLY…GLVA, ILSY…YMLV, AVSG…WFSF, and GALS…VVAL.

It belongs to the UPF0761 family.

It is found in the cell inner membrane. This Chlorobium phaeobacteroides (strain BS1) protein is UPF0761 membrane protein Cphamn1_1013.